The chain runs to 305 residues: UDP-3-O-acyl-N-acetylglucosamine deacetylase (305 aa).

Zn(2+)-binding residues include His79, His238, and Asp242. His265 serves as the catalytic Proton donor.

The protein belongs to the LpxC family. It depends on Zn(2+) as a cofactor.

It carries out the reaction a UDP-3-O-[(3R)-3-hydroxyacyl]-N-acetyl-alpha-D-glucosamine + H2O = a UDP-3-O-[(3R)-3-hydroxyacyl]-alpha-D-glucosamine + acetate. It participates in glycolipid biosynthesis; lipid IV(A) biosynthesis; lipid IV(A) from (3R)-3-hydroxytetradecanoyl-[acyl-carrier-protein] and UDP-N-acetyl-alpha-D-glucosamine: step 2/6. In terms of biological role, catalyzes the hydrolysis of UDP-3-O-myristoyl-N-acetylglucosamine to form UDP-3-O-myristoylglucosamine and acetate, the committed step in lipid A biosynthesis. The sequence is that of UDP-3-O-acyl-N-acetylglucosamine deacetylase from Histophilus somni (strain 129Pt) (Haemophilus somnus).